The primary structure comprises 511 residues: Cytochrome P450 4B1 (511 aa).

Position 315 (E315) interacts with heme. The residue at position 436 (S436) is a Phosphoserine. Heme is bound at residue C453.

Belongs to the cytochrome P450 family. Heme is required as a cofactor. Detected in the liver and lung (at protein level).

Its subcellular location is the endoplasmic reticulum membrane. The protein localises to the microsome membrane. The enzyme catalyses an organic molecule + reduced [NADPH--hemoprotein reductase] + O2 = an alcohol + oxidized [NADPH--hemoprotein reductase] + H2O + H(+). Cytochromes P450 are a group of heme-thiolate monooxygenases. In liver microsomes, this enzyme is involved in an NADPH-dependent electron transport pathway. It oxidizes a variety of structurally unrelated compounds, including steroids, fatty acids, and xenobiotics. This chain is Cytochrome P450 4B1 (CYP4B1), found in Homo sapiens (Human).